We begin with the raw amino-acid sequence, 305 residues long: MRVAIAGYGDLTRYICEEFVKAGHVLVILTRSYKPQLESQGVAQAITDYSPSSLRAPLADCEVLISTISDISSAYTNVHRNLILACQESPRCKRFIPAEFVADIEAYPDEPGFYYAPHEPIREMLRGQTDLEWTLVCIGWLSDYFVPSKNRHIKDIGEFHPMNWAGNKIVIPGTGNEPVDFTWARDVVRGLASLIEAPRGSWEPYTFMSGERSCWNDATRLAVQKYRPGIPIQHVSLHSVAGMIKTAKDENTEVLADYYLLSISQACAIPTDKVEAHREKYFSGVTFRSLRDGLCQVDEHPDSIL.

This sequence belongs to the NmrA-type oxidoreductase family. Isoflavone reductase subfamily.

It carries out the reaction L-pipecolate + O2 = L-1-piperideine-6-carboxylate + H2O2 + H(+). It functions in the pathway mycotoxin biosynthesis. Oxidoreductase; part of the gene cluster that mediates the biosynthesis of swainsonine (SW), a cytotoxic fungal alkaloid and a potential cancer therapy drug. Swainsonine production occurs via a multibranched pathway and is dispensable for fungal colonization of plants and infection of insect hosts. The first step of swainsonine biosynthesis is the production of the precursor pipecolic acid (PA) via conversion of L-lysine (Lys) to 1-piperideine-6-carboxylate (P6C) by the aminotransferase swnA, the latter being further reduced to PA by the reductase swnR. PA can be converted from lysine by both the SW biosynthetic cluster and the unclustered genes such as lysine cyclodeaminase. The PKS-NRPS hybrid synthetase swnK uptakes and condensates PA and malonyl-CoA with and without skipping of the ketoreductase (KR) domain in order to produce 3 intermediates, 1-oxoindolizidine, (1S)-1-hydroxyindolizin, and (1R)-1-hydroxyindolizine; with the transisomer (1S)-1-hydroxyindolizin being predominant. The terminal thioester reductase (TE) domain of swnK is involved in reduction of the thioester bond to release the intermediate aldehydes. The oxidoreductase swnN could contribute to the reduction of 1-oxoindolizidine to (1S)-1-hydroxyindolizin and (1R)-1-hydroxyindolizine, contributing to the major route of SW production. The dioxygenase swnH2 would be responsible for the oxidization of (1R)-1-hydroxyindolizine into (1R,2S)-1,2-dihydroxyindolizine and of (1S)-1-hydroxyindolizin to yield both (1R,2S)-1,2-dihydroxyindolizine and (1S,2S)-1,2-dihydroxyindolizine. The dioxygenase swnH1 then performs the conversion of the 1,2-dihydroxyindolizine epimers to SW. This is Oxidoreductase swnR from Metarhizium robertsii (strain ARSEF 23 / ATCC MYA-3075) (Metarhizium anisopliae (strain ARSEF 23)).